We begin with the raw amino-acid sequence, 251 residues long: uncharacterized protein (251 aa).

This sequence belongs to the FAM243 family.

This is an uncharacterized protein from Mus musculus (Mouse).